The primary structure comprises 1033 residues: NACHT, LRR and PYD domains-containing protein 3 (1033 aa).

A Pyrin domain is found at 1–91; sequence MTSVRCKLAQ…WEKAKKDQPE (91 aa). Ser-3 is modified (phosphoserine). Cys-6 and Cys-104 are disulfide-bonded. Phosphotyrosine is present on Tyr-11. Cys-126 is lipidated: S-palmitoyl cysteine. Residues 127–130 are required for binding to phosphatidylinositol 4-phosphate (PtdIns4P); sequence KKKK. 3 positions are modified to phosphotyrosine; by BTK: Tyr-132, Tyr-136, and Tyr-145. In terms of domain architecture, FISNA spans 136–206; sequence YRRHVRSRFY…SSLKLELLFE (71 aa). At Ser-157 the chain carries Phosphoserine. Tyr-164 is subject to Phosphotyrosine; by BTK. Thr-165 is an ATP binding site. Residue Ser-194 is modified to Phosphoserine; by MAPK8. At Ser-197 the chain carries Phosphoserine. Residues 216–532 enclose the NACHT domain; the sequence is HTVVFQGAAG…EFFAAMYYLL (317 aa). 222–230 is a binding site for ATP; sequence GAAGIGKTI. Ser-261 carries the phosphoserine modification. Phosphoserine; by PKD/PRKD1 is present on Ser-291. A Glycyl lysine isopeptide (Lys-Gly) (interchain with G-Cter in ubiquitin) cross-link involves residue Lys-320. Ser-330 carries the post-translational modification Phosphoserine. The KFERQ-like motif 1 motif lies at 351–355; it reads LEKLQ. Lys-426 is covalently cross-linked (Glycyl lysine isopeptide (Lys-Gly) (interchain with G-Cter in ubiquitin)). Residue His-518 coordinates ATP. The short motif at 601–605 is the KFERQ-like motif 2 element; sequence QVRLE. Residue Lys-687 forms a Glycyl lysine isopeptide (Lys-Gly) (interchain with G-Cter in ubiquitin) linkage. Ser-725 and Ser-732 each carry phosphoserine. 5 LRR repeats span residues 739 to 759, 768 to 789, 796 to 816, 825 to 846, and 853 to 873; these read SLTE…RVLC, NIQR…DISS, KLVE…RLLC, NLQK…DLAL, and SLTR…QVLC. Residues 795–799 carry the KFERQ-like motif 3 motif; the sequence is QKLVE. Position 803 is a phosphoserine; by CSNK1A1 (Ser-803). S-palmitoyl cysteine attachment occurs at residues Cys-834, Cys-835, and Cys-841. Tyr-858 is subject to Phosphotyrosine. Lys-875 participates in a covalent cross-link: Glycyl lysine isopeptide (Lys-Gly) (interchain with G-Cter in ubiquitin). LRR repeat units follow at residues 882–903, 910–930, 939–960, and 967–988; these read NLQK…ALTS, NFTH…RLLC, KLQM…NLST, and SLRK…TLCE. Cys-955 carries S-palmitoyl cysteine lipidation. Lys-970 is covalently cross-linked (Glycyl lysine isopeptide (Lys-Gly) (interchain with G-Cter in ubiquitin)). Residues 988–992 carry the KFERQ-like motif 4 motif; it reads EVLKQ. The residue at position 1032 (Ser-1032) is a Phosphoserine.

This sequence belongs to the NLRP family. In terms of assembly, sensor component of NLRP3 inflammasomes; inflammasomes are supramolecular complexes that assemble in the cytosol in response to pathogens and other damage-associated signals and play critical roles in innate immunity and inflammation. The core of NLRP3 inflammasomes consists of a signal sensor component (NLRP3), an adapter (PYCARD/ASC), which recruits an effector pro-inflammatory caspase (CASP1 and, possibly, CASP4 and CASP5). Homodecamer; inactive NLRP3 forms homodecameric double-ring cages that hide pyrin domains within NACHT-LRR rings to avoid premature activation. Interacts (via pyrin domain) with PYCARD/ASC (via pyrin domain); interaction is direct. Interacts (via LRR repeat domain) with NEK7 (via N-terminus); the interaction is required for the formation of the complex NLRP3:PYCARD, oligomerization of PYCARD/ASC and activation of CASP1. Interacts (via LRR repeat domain) with NR4A1/Nur77 (via N-terminus); the interaction is direct, requires activation of NR4A1 by its ligands NBRE-containing dsDNA and lipopolysaccharide, and stimulates the association of NLRP3 with NEK7 for non-canonical NLRP3 inflammasome activation. Interacts with CARD8; leading to inhibit formation of the NLRP3 inflammasome. Interacts with MEFV; this interaction targets NLRP3 to degradation by autophagy, hence preventing excessive IL1B- and IL18-mediated inflammation. Interacts with EIF2AK2/PKR; this interaction requires EIF2AK2 activity, is accompanied by EIF2AK2 autophosphorylation and promotes inflammasome assembly in response to specific stimuli. Interacts with GBP5 (via DAPIN domain); this interaction promotes inflammasome assembly in response to microbial and soluble, but not crystalline, agents. Interacts with PML (isoform PML-1) (via the leucine-rich repeat (LRR) domain); PML-mediated increase in NLRP3 inflammasome activation does not depend upon this interaction. Interacts (via NACHT domain) with DHX33 (via DEAH box); NLRP3 activation in presence of cytosolic dsRNA is mediated by DHX33. Interacts (via NACHT and LRR domains) with ARRB2; this interaction is direct and inducible by polyunsaturated fatty acids (PUFAs). Interacts (via NACHT domain) with DDX3X under both LPS-primed and inflammasome-activating conditions. Interacts with IRF4 (via the LRR domain); this interaction is direct and is required for optimal IRF4 binding to IL4 promoter and efficient IL4 transactivation during differentiation of Th2 helper T-cells. Interacts with MAVS; promoting localization to mitochondria and activation of the NLRP3 inflammasome. Interacts with MARK4; promoting localization of NLRP3 to the microtubule organizing center (MTOC). Interacts with TRIM50; this interaction also promotes NLRP3 oligomerization and subsequent inflammasome activation. Interacts with IRGM; preventing NLRP3 inflammasome assembly and promoting NLRP3 degradation. Interacts (via KFERQ-like motifs) with HSPA8/HSC70; promoting NLRP3 degradation by the chaperone-mediated autophagy pathway. Interacts (via NACHT and LLR domains) with ABHD8; this interaction is enhanced in the presence of NLRP3 inflammasome inducers, such as ATP, nigericin, silica, or alum. Interaction with ABHD8 leads the recruitment of ZDHHC12, hence facilitating NLRP3 palmitoylation and degradation by the chaperone-mediated autophagy pathway (CMA), therefore attenuating NLRP3 inflammasome activation. In terms of processing, phosphorylation at Ser-194 by MAPK8/JNK1 increases inflammasome activation by promoting deubiquitination by BRCC3 and NLRP3 homooligomerization. Phosphorylation at Ser-803 by CSNK1A1 prevents inflammasome activation by preventing NEK7 recruitment. Phosphorylation at Ser-3 in the pyrin domain inhibits homomultimerization of NLRP3 and activation of the NLRP3 inflammasome: dephosphorylation by protein phosphatase 2A (PP2A) promotes assembly of the NLRP3 inflammasome. Phosphorylation at Ser-291 by PKD/PRKD1 promotes NLRP3 inflammasome assembly. Phosphorylation by ERK1/MAPK3 promotes NLRP3 inflammasome assembly. Phosphorylation by BTK (at Tyr-132, Tyr-136, Tyr-145 and Tyr-164) in the region that mediates binding to phosphatidylinositol phosphate, promotes relocalization of NLRP3 and assembly of the NLRP3 inflammasome. Phosphorylation at Tyr-858 inhibits NLRP3 inflammasome assembly: dephosphorylation by PTPN22 promotes inflammasome activation Phosphorylated by LATS1 and LATS2 at Ser-261 following palmitoylation by ZDHHC1, promoting its relocalization to the microtubule organizing center (MTOC), where NLRP3 is activated by NEK7, leading to inflammasome assembly and activation. Ubiquitinated; undergoes both 'Lys-48'- and 'Lys-63'-linked polyubiquitination. Ubiquitination does not lead to degradation, but inhibits inflammasome activation. Deubiquitination is catalyzed by BRCC3 and associated with NLRP3 activation and inflammasome assembly. This process can be induced by the activation of Toll-like receptors (by LPS), through a non-transcriptional pathway dependent on the mitochondrial production of reactive oxygen species, and by ATP. Ubiquitinated by TRIM31 via 'Lys-48'-linked ubiquitination, leading to its degradation by the proteasome. Ubiquitinated at Lys-687 by the SCF(FBXL2) complex, leading to its degradation by the proteasome. Ubiquitinated by TRIM35 via 'lys-48' and 'Lys-63'-linked ubiquitination leading to inhibition of NLRP3 inflammasome activation. Undergoes 'Lys-27'-linked polyubiquitination by MARCHF5, leading to NLRP3-NEK7 complex formation and NLRP3 oligomerization. Post-translationally, the disulfide bond in the pyrin domain might play a role in reactive oxygen species-mediated activation. In terms of processing, palmitoylation by ZDHHC12 promotes NLRP3 degradation by the chaperone-mediated autophagy pathway (CMA) and therefore limits NLRP3 inflammasome activation. Interaction with ZDHHC12, and hence NLRP3 palmitoylation, is enhanced by ABHD8. Following palmitoylation, HSPA8/HSC70 recognizes and binds the KFERQ-like motifs on NLRP3 and promotes NLRP3 recruitment to lysosomes, where it is degraded via the chaperone-mediated autophagy pathway in a LAMP2-dependent process. Palmitoylation at Cys-834 and Cys-835 by ZDHHC5 enhances its binding to NEK7 leading to inflammasome assembly and activation. Palmitoylation at Cys-126 and Cys-955 by ZDHHC1 facilitates phosphorylation at Ser-261 by LATS1 and LATS2, promoting its relocalization to the microtubule organizing center (MTOC), where NLRP3 is activated by NEK7, leading to inflammasome assembly and activation. Depalmitoylated by ABHD17A. Degraded via selective autophagy following interaction with Irgm1. Irgm1 promotes NLRP3 recruitment to autophagosome membranes, promoting its SQSTM1/p62-dependent autophagy-dependent degradation. Expressed with high levels in peripheral blood leukocytes, including Th2 lymphocytes and macrophages. Expressed at low levels in resting osteoblasts (at protein level).

It localises to the cytoplasm. The protein resides in the cytosol. Its subcellular location is the inflammasome. The protein localises to the cytoskeleton. It is found in the microtubule organizing center. It localises to the golgi apparatus membrane. The protein resides in the endoplasmic reticulum. Its subcellular location is the mitochondrion. The protein localises to the secreted. It is found in the nucleus. It carries out the reaction ATP + H2O = ADP + phosphate + H(+). Under resting conditions, NLRP3 binds ADP and is autoinhibited. Inactive NLRP3 forms homodecameric double-ring cages that hide pyrin domains within NACHT-LRR rings to avoid premature activation. NLRP3 activation stimuli include extracellular ATP, nigericin, reactive oxygen species, crystals of monosodium urate or cholesterol, amyloid-beta fibers, environmental or industrial particles and nanoparticles, such as asbestos, silica, aluminum salts, cytosolic dsRNA, etc. Almost all stimuli trigger intracellular K(+) efflux. These stimuli lead to membrane perturbations that induce activation of NLRP3. Upon activation, NLRP3 is transported to microtubule organizing center (MTOC), where it is unlocked by NEK7, leading to its relocalization to dispersed trans-Golgi network (dTGN) vesicle membranes and recruitment of PYCARD/ASC for the formation of an active inflammasome complex. NEK7-activated NLRP3 forms a disk-shaped inflammasome. NLRP3 and PYCARD/ASC interact via their respective pyrin domains; interaction initiates speck formation (nucleation) which greatly enhances further addition of soluble PYCARD/ASC molecules to the speck in a prion-like polymerization process. Clustered PYCARD/ASC nucleates the formation of CASP1 filaments through the interaction of their respective CARD domains, acting as a platform for CASP1 polymerization and activation. Active CASP1 then processes IL1B and IL18 precursors, leading to the release of mature cytokines in the extracellular milieu and inflammatory response. NLRP3 inflammasome assembly is inhibited by IRGM, which impedes NLRP3 oligomerization. NLRP3 inflammasome is inhibited by cyclic AMP (cAMP), which directly binds NLRP3; inhibition is relieved by calcium-sensing receptor CASR, which inhibits production of cAMP. Specifically inhibited by sulfonylurea MCC950 (also named CP-456,773, CRID3), a potent and specific small-molecule inhibitor of the NLRP3 inflammasome that acts by preventing ATP hydrolysis. Sensor component of the NLRP3 inflammasome, which mediates inflammasome activation in response to defects in membrane integrity, leading to secretion of inflammatory cytokines IL1B and IL18 and pyroptosis. In response to pathogens and other damage-associated signals that affect the integrity of membranes, initiates the formation of the inflammasome polymeric complex composed of NLRP3, CASP1 and PYCARD/ASC. Recruitment of pro-caspase-1 (proCASP1) to the NLRP3 inflammasome promotes caspase-1 (CASP1) activation, which subsequently cleaves and activates inflammatory cytokines IL1B and IL18 and gasdermin-D (GSDMD), promoting cytokine secretion and pyroptosis. Activation of NLRP3 inflammasome is also required for HMGB1 secretion; stimulating inflammatory responses. Under resting conditions, ADP-bound NLRP3 is autoinhibited. NLRP3 activation stimuli include extracellular ATP, nigericin, reactive oxygen species, crystals of monosodium urate or cholesterol, amyloid-beta fibers, environmental or industrial particles and nanoparticles, such as asbestos, silica, aluminum salts, cytosolic dsRNA, etc. Almost all stimuli trigger intracellular K(+) efflux. These stimuli lead to membrane perturbation and activation of NLRP3. Upon activation, NLRP3 is transported to microtubule organizing center (MTOC), where it is unlocked by NEK7, leading to its relocalization to dispersed trans-Golgi network (dTGN) vesicle membranes and formation of an active inflammasome complex. Associates with dTGN vesicle membranes by binding to phosphatidylinositol 4-phosphate (PtdIns4P). Shows ATPase activity. In terms of biological role, independently of inflammasome activation, regulates the differentiation of T helper 2 (Th2) cells and has a role in Th2 cell-dependent asthma and tumor growth. During Th2 differentiation, required for optimal IRF4 binding to IL4 promoter and for IRF4-dependent IL4 transcription. Binds to the consensus DNA sequence 5'-GRRGGNRGAG-3'. May also participate in the transcription of IL5, IL13, GATA3, CCR3, CCR4 and MAF. This Mus musculus (Mouse) protein is NACHT, LRR and PYD domains-containing protein 3.